Reading from the N-terminus, the 206-residue chain is Large ribosomal subunit protein uL4 (206 aa).

Residues Ala-43–Ser-78 are disordered. Residues His-58–Gly-70 are compositionally biased toward basic residues.

Belongs to the universal ribosomal protein uL4 family. In terms of assembly, part of the 50S ribosomal subunit.

In terms of biological role, one of the primary rRNA binding proteins, this protein initially binds near the 5'-end of the 23S rRNA. It is important during the early stages of 50S assembly. It makes multiple contacts with different domains of the 23S rRNA in the assembled 50S subunit and ribosome. Forms part of the polypeptide exit tunnel. This is Large ribosomal subunit protein uL4 from Polynucleobacter necessarius subsp. necessarius (strain STIR1).